Reading from the N-terminus, the 108-residue chain is uncharacterized protein (108 aa).

The interval Thr75–Thr94 is disordered. Residues Ser79–Thr94 are compositionally biased toward low complexity.

This is an uncharacterized protein from Homo sapiens (Human).